A 547-amino-acid chain; its full sequence is MAAKEVKFGREARERLLRGVDILANAVKVTLGPKGRNVVIDKSFGAPRITKDGVSVAKEIELEDKFENMGAQMLREVASKTNDIAGDGTTTATVLGQAIVQEGVKAVAAGMNPMDLKRGIDAAVEEVVGNLFKKAKKIQTSAEIAQVGTISANGAAEIGKMIADAMEKVGNEGVITVEEAKTAETELEVVEGMQFDRGYLSPYFVTNADKMVADLDDPYILIHEKKLSNLQSLLPVLEAVVQSGKPLLIIAEDVEGEALATLVVNKLRGGLKIAAVKAPGFGDRRKAMLEDIAILTSGQVISEDVGIKLENVTLDMLGRAKKVNISKENTTIIDGAGKKAEINARVNQIKVQIEETTSDYDREKLQERLAKLAGGVAVIRVGGATEVEVKEKKDRVDDALNATRAAVEEGIVAGGGTALLRAANALAIKGSNPDQEAGINIVRRALQAPARQIATNAGEEAAIIVGKVLENNADTFGYNTATGQFGDLIALGIVDPVKVVRSALQNAASIASLLITTEAMVAEVPKKDTPMPPMPGGGMGGMGGMDF.

ATP is bound by residues T30–P33, K51, D87–T91, G415, and D495.

The protein belongs to the chaperonin (HSP60) family. In terms of assembly, forms a cylinder of 14 subunits composed of two heptameric rings stacked back-to-back. Interacts with the co-chaperonin GroES.

It localises to the cytoplasm. It catalyses the reaction ATP + H2O + a folded polypeptide = ADP + phosphate + an unfolded polypeptide.. In terms of biological role, together with its co-chaperonin GroES, plays an essential role in assisting protein folding. The GroEL-GroES system forms a nano-cage that allows encapsulation of the non-native substrate proteins and provides a physical environment optimized to promote and accelerate protein folding. The sequence is that of Chaperonin GroEL from Bartonella quintana (strain Toulouse) (Rochalimaea quintana).